We begin with the raw amino-acid sequence, 410 residues long: MKQELIERFTRYVKIDTQSNEESHTVPTTPGQIEFGKLLVEELKEIGLTEVTMDDNGYVMATLPANTDKDVPVIGFLAHLDTATDFTGKNVKPQIHENFDGNAITLNEELNVVLTPEQFPELPSYKGHTIITTDGTTLLGADDKAGLTEIMVAMNHLIHNPQIKHGKIRVAFTPDEEIGRGPAHFDVEAFGASFAYTMDGGPLGGLEYESFNAAGAKLTFNGTNTHPGTAKNKMRNATKLAMEFNGYLPVEEAPEYTEGYEGFYHLLSLNGDVEQSKAYYIIRDFDRENFEARKNNVKNIVKTMQEKYGEDAVVLEMNDQYYNMLEKIEPVREIVDIAYEAMKSLDIEPNIHPIRGGTDGSQLSYMGLPTPNIFTGGENYHGKFEYVSVDTMEKAVQVIVEIARRFEEQA.

Residue His-79 participates in Zn(2+) binding. Residue Asp-81 is part of the active site. Asp-142 contacts Zn(2+). Glu-176 functions as the Proton acceptor in the catalytic mechanism. 3 residues coordinate Zn(2+): Glu-177, Asp-199, and His-381.

This sequence belongs to the peptidase M20B family. Zn(2+) serves as cofactor.

The protein localises to the cytoplasm. It carries out the reaction Release of the N-terminal residue from a tripeptide.. In terms of biological role, cleaves the N-terminal amino acid of tripeptides. This chain is Peptidase T, found in Bacillus cereus (strain B4264).